We begin with the raw amino-acid sequence, 441 residues long: Ribulose bisphosphate carboxylase large chain (441 aa).

Substrate-binding residues include asparagine 89 and threonine 139. Lysine 141 (proton acceptor) is an active-site residue. Lysine 143 lines the substrate pocket. Mg(2+) is bound by residues lysine 167, aspartate 169, and glutamate 170. Lysine 167 carries the post-translational modification N6-carboxylysine. Histidine 260 serves as the catalytic Proton acceptor. The substrate site is built by arginine 261, histidine 293, and serine 345.

The protein belongs to the RuBisCO large chain family. Type I subfamily. Heterohexadecamer of 8 large chains and 8 small chains; disulfide-linked. The disulfide link is formed within the large subunit homodimers. Mg(2+) serves as cofactor. In terms of processing, the disulfide bond which can form in the large chain dimeric partners within the hexadecamer appears to be associated with oxidative stress and protein turnover.

The protein localises to the plastid. Its subcellular location is the chloroplast. It carries out the reaction 2 (2R)-3-phosphoglycerate + 2 H(+) = D-ribulose 1,5-bisphosphate + CO2 + H2O. It catalyses the reaction D-ribulose 1,5-bisphosphate + O2 = 2-phosphoglycolate + (2R)-3-phosphoglycerate + 2 H(+). In terms of biological role, ruBisCO catalyzes two reactions: the carboxylation of D-ribulose 1,5-bisphosphate, the primary event in carbon dioxide fixation, as well as the oxidative fragmentation of the pentose substrate in the photorespiration process. Both reactions occur simultaneously and in competition at the same active site. This is Ribulose bisphosphate carboxylase large chain from Polemonium reptans (Greek valerian).